A 273-amino-acid polypeptide reads, in one-letter code: Urease accessory protein UreD (273 aa).

The protein belongs to the UreD family. UreD, UreF and UreG form a complex that acts as a GTP-hydrolysis-dependent molecular chaperone, activating the urease apoprotein by helping to assemble the nickel containing metallocenter of UreC. The UreE protein probably delivers the nickel.

The protein resides in the cytoplasm. Functionally, required for maturation of urease via the functional incorporation of the urease nickel metallocenter. The protein is Urease accessory protein UreD of Rhizobium etli (strain ATCC 51251 / DSM 11541 / JCM 21823 / NBRC 15573 / CFN 42).